The primary structure comprises 383 residues: Succinyl-diaminopimelate desuccinylase (383 aa).

H68 serves as a coordination point for Zn(2+). D70 is an active-site residue. A Zn(2+)-binding site is contributed by D100. Catalysis depends on E130, which acts as the Proton acceptor. Residues E131, E159, and H352 each contribute to the Zn(2+) site.

Belongs to the peptidase M20A family. DapE subfamily. In terms of assembly, homodimer. The cofactor is Zn(2+). It depends on Co(2+) as a cofactor.

The catalysed reaction is N-succinyl-(2S,6S)-2,6-diaminopimelate + H2O = (2S,6S)-2,6-diaminopimelate + succinate. It functions in the pathway amino-acid biosynthesis; L-lysine biosynthesis via DAP pathway; LL-2,6-diaminopimelate from (S)-tetrahydrodipicolinate (succinylase route): step 3/3. Functionally, catalyzes the hydrolysis of N-succinyl-L,L-diaminopimelic acid (SDAP), forming succinate and LL-2,6-diaminopimelate (DAP), an intermediate involved in the bacterial biosynthesis of lysine and meso-diaminopimelic acid, an essential component of bacterial cell walls. This Granulibacter bethesdensis (strain ATCC BAA-1260 / CGDNIH1) protein is Succinyl-diaminopimelate desuccinylase.